Here is a 120-residue protein sequence, read N- to C-terminus: Large ribosomal subunit protein uL18 (120 aa).

It belongs to the universal ribosomal protein uL18 family. In terms of assembly, part of the 50S ribosomal subunit; part of the 5S rRNA/L5/L18/L25 subcomplex. Contacts the 5S and 23S rRNAs.

This is one of the proteins that bind and probably mediate the attachment of the 5S RNA into the large ribosomal subunit, where it forms part of the central protuberance. This chain is Large ribosomal subunit protein uL18, found in Rhodopseudomonas palustris (strain BisB18).